The sequence spans 352 residues: MTEAGKLPLPLPPRLDWFVHTQMGQLAQDGVPEWFHGAISREDAENLLESQPLGSFLIRVSHSHVGYTLSYKAQSSCCHFMVKLLDDGTFMIPGEKVAHTSLDALVTFHQQKPIEPRRELLTQPCRQKDPANVDYEDLFLYSNAVAEEAACPVSAPEEASPKPVLCHQSKERKPSAEMNRITTKEATSSCPPKSPLGETRQKLWRSLKMLPERGQRVRQQLKSHLATVNLSSLLDVRRSTVISGPGTGKGSQDHSGDPTSGDRGYTDPCVATSLKSPSQPQAPKDRKVPTRKAERSVSCIEVTPGDRSWHQMVVRALSSQESKPEHQGLAEPENDQLPEEYQQPPPFAPGYC.

Positions W34–C125 constitute an SH2 domain. 2 disordered regions span residues E157–T199 and V241–C352. Residues R180–P191 are compositionally biased toward polar residues. Basic and acidic residues predominate over residues P283 to R295. The segment covering Q343–C352 has biased composition (pro residues).

In terms of assembly, interacts with FES and TNK2. Post-translationally, may be phosphorylated by FES and ACK1. As to expression, predominantly expressed in spleen and hematopoietic cells such as peripheral blood leukocytes and weakly expressed in prostate, thymus, heart, small intestine and placenta.

It localises to the cytoplasm. Its subcellular location is the nucleus. In terms of biological role, may be a modulator of the apoptotic response through its ability to affect mitochondrial stability. Adapter protein involved in tyrosine kinase and CD28 signaling. Seems to affect CD28-mediated activation of the RE/AP element of the interleukin-2 promoter. The sequence is that of Hematopoietic SH2 domain-containing protein (HSH2D) from Homo sapiens (Human).